Consider the following 481-residue polypeptide: Tryptophan 5-hydroxylase (481 aa).

The region spanning serine 56–asparagine 131 is the ACT domain. Tyrosine 272, arginine 294, and threonine 302 together coordinate L-tryptophan. Fe cation contacts are provided by histidine 309, histidine 314, and glutamate 354. The L-tryptophan site is built by serine 373 and isoleucine 403.

Belongs to the biopterin-dependent aromatic amino acid hydroxylase family. Homotetramer. Fe(2+) is required as a cofactor.

The enzyme catalyses (6R)-L-erythro-5,6,7,8-tetrahydrobiopterin + L-tryptophan + O2 = 5-hydroxy-L-tryptophan + (4aS,6R)-4a-hydroxy-L-erythro-5,6,7,8-tetrahydrobiopterin. It functions in the pathway aromatic compound metabolism; serotonin biosynthesis; serotonin from L-tryptophan: step 1/2. In terms of biological role, oxidizes L-tryptophan to 5-hydroxy-l-tryptophan in the rate-determining step of serotonin biosynthesis. The sequence is that of Tryptophan 5-hydroxylase (tph1) from Xenopus laevis (African clawed frog).